The chain runs to 180 residues: UPF0227 protein Spro_1925 (180 aa).

It belongs to the UPF0227 family.

The sequence is that of UPF0227 protein Spro_1925 from Serratia proteamaculans (strain 568).